Consider the following 84-residue polypeptide: Small ribosomal subunit protein eS27 (84 aa).

Residues Met-1 to Lys-16 show a composition bias toward basic and acidic residues. Positions Met-1–Val-25 are disordered. At Ser-11 the chain carries Phosphoserine. The C4-type zinc-finger motif lies at Pro-38 to Ser-60.

This sequence belongs to the eukaryotic ribosomal protein eS27 family. Component of the small ribosomal subunit. Part of the small subunit (SSU) processome, composed of more than 70 proteins and the RNA chaperone small nucleolar RNA (snoRNA) U3. The cofactor is Zn(2+).

It localises to the cytoplasm. It is found in the nucleus. Its subcellular location is the nucleolus. Its function is as follows. Component of the small ribosomal subunit. The ribosome is a large ribonucleoprotein complex responsible for the synthesis of proteins in the cell. Required for proper rRNA processing and maturation of 18S rRNAs. Part of the small subunit (SSU) processome, first precursor of the small eukaryotic ribosomal subunit. During the assembly of the SSU processome in the nucleolus, many ribosome biogenesis factors, an RNA chaperone and ribosomal proteins associate with the nascent pre-rRNA and work in concert to generate RNA folding, modifications, rearrangements and cleavage as well as targeted degradation of pre-ribosomal RNA by the RNA exosome. In Pongo abelii (Sumatran orangutan), this protein is Small ribosomal subunit protein eS27 (RPS27).